Here is a 353-residue protein sequence, read N- to C-terminus: Protein XRP2 (353 aa).

Residues Met-1–Lys-37 form a disordered region. Gly-2 is lipidated: N-myristoyl glycine. Cys-3 carries S-palmitoyl cysteine lipidation. The span at Glu-25–Lys-37 shows a compositional bias: basic and acidic residues. The region spanning Pro-27–Pro-182 is the C-CAP/cofactor C-like domain. Residues Gly-101–Ser-102 and Gln-118–Arg-121 each bind GTP.

This sequence belongs to the TBCC family. Post-translationally, myristoylated on Gly-2; which may be required for membrane targeting. In terms of processing, palmitoylated on Cys-3; which may be required for plasma membrane targeting.

The protein resides in the cell membrane. In terms of biological role, acts as a GTPase-activating protein (GAP) for tubulin in concert with tubulin-specific chaperone C, but does not enhance tubulin heterodimerization. Acts as a GTPase-activating protein. May act as guanine nucleotide dissociation inhibitor towards ADP-ribosylation factor-like proteins. The chain is Protein XRP2 (rp2) from Xenopus laevis (African clawed frog).